The sequence spans 255 residues: Diphthine synthase (255 aa).

S-adenosyl-L-methionine is bound by residues L9, D85, V88, 113–114, L164, A207, and H232; that span reads SI.

The protein belongs to the diphthine synthase family. Homodimer.

The enzyme catalyses 2-[(3S)-amino-3-carboxypropyl]-L-histidyl-[translation elongation factor 2] + 3 S-adenosyl-L-methionine = diphthine-[translation elongation factor 2] + 3 S-adenosyl-L-homocysteine + 3 H(+). It participates in protein modification; peptidyl-diphthamide biosynthesis. S-adenosyl-L-methionine-dependent methyltransferase that catalyzes the trimethylation of the amino group of the modified target histidine residue in translation elongation factor 2 (EF-2), to form an intermediate called diphthine. The three successive methylation reactions represent the second step of diphthamide biosynthesis. The chain is Diphthine synthase from Methanococcus maripaludis (strain C7 / ATCC BAA-1331).